The sequence spans 255 residues: Proteasome subunit alpha (255 aa).

The segment at 228-255 is disordered; the sequence is LLASPAGTSGPTGEPGPAGTAATDGGDL. Positions 232–255 are enriched in low complexity; it reads PAGTSGPTGEPGPAGTAATDGGDL.

This sequence belongs to the peptidase T1A family. The 20S proteasome core is composed of 14 alpha and 14 beta subunits that assemble into four stacked heptameric rings, resulting in a barrel-shaped structure. The two inner rings, each composed of seven catalytic beta subunits, are sandwiched by two outer rings, each composed of seven alpha subunits. The catalytic chamber with the active sites is on the inside of the barrel. Has a gated structure, the ends of the cylinder being occluded by the N-termini of the alpha-subunits. Is capped by the proteasome-associated ATPase, ARC.

The protein resides in the cytoplasm. The protein operates within protein degradation; proteasomal Pup-dependent pathway. Its activity is regulated as follows. The formation of the proteasomal ATPase ARC-20S proteasome complex, likely via the docking of the C-termini of ARC into the intersubunit pockets in the alpha-rings, may trigger opening of the gate for substrate entry. Interconversion between the open-gate and close-gate conformations leads to a dynamic regulation of the 20S proteasome proteolysis activity. Its function is as follows. Component of the proteasome core, a large protease complex with broad specificity involved in protein degradation. This chain is Proteasome subunit alpha, found in Sanguibacter keddieii (strain ATCC 51767 / DSM 10542 / NCFB 3025 / ST-74).